The primary structure comprises 62 residues: Large ribosomal subunit protein uL30 (62 aa).

It belongs to the universal ribosomal protein uL30 family. Part of the 50S ribosomal subunit.

This Pseudoalteromonas atlantica (strain T6c / ATCC BAA-1087) protein is Large ribosomal subunit protein uL30.